The following is a 368-amino-acid chain: Tubby-like F-box protein 2 (368 aa).

Low complexity predominate over residues 1–17 (MVPWRRSSSSSSAPSSR). Positions 1 to 44 (MVPWRRSSSSSSAPSSRPARRPARTNARVSPDVSSELSPLAGEE) are disordered. The F-box domain maps to 49-104 (ERWSALVPDLLADILRCVEAGSERWPPRRDVVACASVCRRWRDVAVAVVQPPLESG).

This sequence belongs to the TUB family. Expressed in stems, leaves, flowers and seeds.

In Oryza sativa subsp. japonica (Rice), this protein is Tubby-like F-box protein 2 (TULP2).